The following is a 96-amino-acid chain: Co-chaperonin GroES (96 aa).

The protein belongs to the GroES chaperonin family. As to quaternary structure, heptamer of 7 subunits arranged in a ring. Interacts with the chaperonin GroEL.

It is found in the cytoplasm. In terms of biological role, together with the chaperonin GroEL, plays an essential role in assisting protein folding. The GroEL-GroES system forms a nano-cage that allows encapsulation of the non-native substrate proteins and provides a physical environment optimized to promote and accelerate protein folding. GroES binds to the apical surface of the GroEL ring, thereby capping the opening of the GroEL channel. In Alteromonas mediterranea (strain DSM 17117 / CIP 110805 / LMG 28347 / Deep ecotype), this protein is Co-chaperonin GroES.